Reading from the N-terminus, the 478-residue chain is Zinc metalloproteinase/disintegrin (478 aa).

A signal peptide spans 1-20; that stretch reads MIEVLLVTICLAAFPYQGSS. The propeptide occupies 21-187; that stretch reads IILESGNVND…PIKKASQSNL (167 aa). Cystine bridges form between cysteine 304–cysteine 384, cysteine 344–cysteine 368, and cysteine 346–cysteine 351. Histidine 329 serves as a coordination point for Zn(2+). Residue glutamate 330 is part of the active site. Zn(2+)-binding residues include histidine 333 and histidine 339. A propeptide spanning residues 390–405 is cleaved from the precursor; it reads LRTDTVSTPVSGNELL. Residues 397–478 enclose the Disintegrin domain; sequence TPVSGNELLE…AGCPRNPFHA (82 aa). Intrachain disulfides connect cysteine 411/cysteine 426, cysteine 413/cysteine 421, cysteine 420/cysteine 443, cysteine 434/cysteine 440, cysteine 439/cysteine 464, and cysteine 452/cysteine 471. Positions 456 to 458 match the Cell attachment site motif; the sequence is RGD.

Belongs to the venom metalloproteinase (M12B) family. P-II subfamily. P-IIa sub-subfamily. As to quaternary structure, monomer. Expressed by the venom gland.

It is found in the secreted. In terms of biological role, binds alpha-5/beta-1 (ITGAV/ITGB1), alpha-V/beta-3 (ITGAV/ITGB3) and alpha-M/beta-2 (ITGAM/ITGB2) integrins. Is a potent inhibitor of platelet aggregation induced by ADP, collagen, and thrombin. Induces neutrophil chemotaxis and inhibits the chemotaxis of human neutrophils toward fMLP, IL-8, and jarastatin itself. Directly activates an integrin-coupled signaling and modulate the MAPK pathway in different ways, leading the neutrophils to express different functional response. Induces Erk-2 translocation to nucleus and a delay of the spontaneous apoptosis of neutrophils. Increases the IL-8 mRNA levels in neutrophils. When injected simultaneously with melanoma cells in mice, jarastatin, flavoridin (FL) and kistrin (KR) significantly reduce tumor lung colonization. Inhibits mouse melanoma B16F10 cell growth in vitro. When it interacts with melanoma cells, it induces actin cytoskeleton rearrangement, increasing actin polymerization and PTK2/FAK1 phosphorylation. Interferes with NF-kappaB translocation in melanoma cells. The sequence is that of Zinc metalloproteinase/disintegrin from Bothrops jararaca (Jararaca).